Reading from the N-terminus, the 149-residue chain is SsrA-binding protein (149 aa).

It belongs to the SmpB family.

Its subcellular location is the cytoplasm. In terms of biological role, required for rescue of stalled ribosomes mediated by trans-translation. Binds to transfer-messenger RNA (tmRNA), required for stable association of tmRNA with ribosomes. tmRNA and SmpB together mimic tRNA shape, replacing the anticodon stem-loop with SmpB. tmRNA is encoded by the ssrA gene; the 2 termini fold to resemble tRNA(Ala) and it encodes a 'tag peptide', a short internal open reading frame. During trans-translation Ala-aminoacylated tmRNA acts like a tRNA, entering the A-site of stalled ribosomes, displacing the stalled mRNA. The ribosome then switches to translate the ORF on the tmRNA; the nascent peptide is terminated with the 'tag peptide' encoded by the tmRNA and targeted for degradation. The ribosome is freed to recommence translation, which seems to be the essential function of trans-translation. The chain is SsrA-binding protein from Carboxydothermus hydrogenoformans (strain ATCC BAA-161 / DSM 6008 / Z-2901).